The sequence spans 175 residues: MSTTTTQKSSYTREDLLACAHGELFGPNNARLPLPNMLMMDRITHISDQGGKYGKGEIIAELDIHPDLWFFDCHFESDPVMPGCLGLDATWQLLGFFLGWVGNPGRGRALGVGNVKFSGQVLPTAKKLTYRIDLKRVISRKLVLGLADATVSVDGKDIYQADDLKVGLFTSTDGF.

The active site involves H74.

The protein belongs to the thioester dehydratase family. FabA subfamily. In terms of assembly, homodimer.

The protein localises to the cytoplasm. The enzyme catalyses a (3R)-hydroxyacyl-[ACP] = a (2E)-enoyl-[ACP] + H2O. It carries out the reaction (3R)-hydroxydecanoyl-[ACP] = (2E)-decenoyl-[ACP] + H2O. It catalyses the reaction (2E)-decenoyl-[ACP] = (3Z)-decenoyl-[ACP]. The protein operates within lipid metabolism; fatty acid biosynthesis. Functionally, necessary for the introduction of cis unsaturation into fatty acids. Catalyzes the dehydration of (3R)-3-hydroxydecanoyl-ACP to E-(2)-decenoyl-ACP and then its isomerization to Z-(3)-decenoyl-ACP. Can catalyze the dehydratase reaction for beta-hydroxyacyl-ACPs with saturated chain lengths up to 16:0, being most active on intermediate chain length. This Alcanivorax borkumensis (strain ATCC 700651 / DSM 11573 / NCIMB 13689 / SK2) protein is 3-hydroxydecanoyl-[acyl-carrier-protein] dehydratase.